A 219-amino-acid polypeptide reads, in one-letter code: Trafficking protein particle complex subunit 4 (219 aa).

It belongs to the TRAPP small subunits family. TRAPPC4 subfamily. As to quaternary structure, component of the multisubunit TRAPP (transport protein particle) complex, which includes at least TRAPPC2, TRAPPC2L, TRAPPC3, TRAPPC3L, TRAPPC4, TRAPPC5, TRAPPC8, TRAPPC9, TRAPPC10, TRAPPC11 and TRAPPC12. Interacts with SDC2. In terms of tissue distribution, widely expressed.

The protein localises to the postsynaptic cell membrane. It is found in the golgi apparatus membrane. It localises to the endoplasmic reticulum. Its subcellular location is the vesicle. In terms of biological role, core component of the TRAPP complexes which has a function of guanine nucleotide exchange factor activity for Rab1 GTPase. Plays a role in vesicular transport from endoplasmic reticulum to Golgi and autophagy. May play a role in dendrite postsynaptic membrane trafficking. The sequence is that of Trafficking protein particle complex subunit 4 from Mus musculus (Mouse).